The sequence spans 819 residues: Leucine--tRNA ligase (819 aa).

The 'HIGH' region signature appears at 40-51 (PYPSGAGLHVGH). Positions 600–604 (KMSKS) match the 'KMSKS' region motif. Residue Lys603 coordinates ATP.

This sequence belongs to the class-I aminoacyl-tRNA synthetase family.

It localises to the cytoplasm. It catalyses the reaction tRNA(Leu) + L-leucine + ATP = L-leucyl-tRNA(Leu) + AMP + diphosphate. The chain is Leucine--tRNA ligase from Chlamydia trachomatis serovar L2 (strain ATCC VR-902B / DSM 19102 / 434/Bu).